The chain runs to 131 residues: Small ribosomal subunit protein uS8 (131 aa).

Belongs to the universal ribosomal protein uS8 family. Part of the 30S ribosomal subunit. Contacts proteins S5 and S12.

In terms of biological role, one of the primary rRNA binding proteins, it binds directly to 16S rRNA central domain where it helps coordinate assembly of the platform of the 30S subunit. This Janthinobacterium sp. (strain Marseille) (Minibacterium massiliensis) protein is Small ribosomal subunit protein uS8.